A 133-amino-acid polypeptide reads, in one-letter code: Ribonuclease VapC10 (133 aa).

Positions 2–119 (ILVDSDVLIA…NVWHFPMFEQ (118 aa)) constitute a PINc domain. Residues Asp-5 and Asp-92 each coordinate Mg(2+).

It belongs to the PINc/VapC protein family. The cofactor is Mg(2+).

Toxic component of a type II toxin-antitoxin (TA) system. An RNase. The cognate antitoxin is VapB10. In Mycobacterium tuberculosis (strain CDC 1551 / Oshkosh), this protein is Ribonuclease VapC10.